Reading from the N-terminus, the 657-residue chain is Filensin (657 aa).

The head stretch occupies residues 1–38 (MYRSSFLREVRKEKYERSDAYDELRGSPEFDSLAQAQG). An IF rod domain is found at 38 to 318 (GLENLQELNE…RIIENEDSRL (281 aa)). The interval 39-73 (LENLQELNERFASYINRARVLEQRNTILRKQLETF) is coil 1A. The segment at 74–82 (QRMDELVGL) is linker 1. The tract at residues 83-182 (DEAFAGQIEF…RYKKNLMEIQ (100 aa)) is coil 1B. Positions 183–199 (TYVNILQQIIQTTPRVS) are linker 12. The segment at 200-318 (PITTGISEEK…RIIENEDSRL (119 aa)) is coil 2. Positions 319–657 (NSAIAGTPVT…SKKKPGDKGS (339 aa)) are tail. Disordered regions lie at residues 503–530 (IGGDVEPIPELPEPSEPSEKEKRDICER) and 565–593 (PDVSEPEAVPSPGLISPAEPGVLQETDHD). Residues 519–530 (PSEKEKRDICER) are compositionally biased toward basic and acidic residues.

This sequence belongs to the intermediate filament family. In terms of tissue distribution, detected in eye lens fiber cells (at protein level). Detected in embryonic eye lens.

It localises to the cell membrane. Its subcellular location is the cytoplasm. It is found in the cytoskeleton. The protein resides in the cell cortex. Its function is as follows. Required for the correct formation of lens intermediate filaments. The sequence is that of Filensin (BFSP1) from Gallus gallus (Chicken).